The primary structure comprises 128 residues: ATP synthase epsilon chain (128 aa).

The segment at 98–128 is disordered; that stretch reads EALDMPSSTPEQAQIKDAAVRRARGQLRASR. Residues 118–128 are compositionally biased toward basic residues; that stretch reads RRARGQLRASR.

The protein belongs to the ATPase epsilon chain family. F-type ATPases have 2 components, CF(1) - the catalytic core - and CF(0) - the membrane proton channel. CF(1) has five subunits: alpha(3), beta(3), gamma(1), delta(1), epsilon(1). CF(0) has three main subunits: a, b and c.

The protein resides in the cell inner membrane. In terms of biological role, produces ATP from ADP in the presence of a proton gradient across the membrane. In Rhodopirellula baltica (strain DSM 10527 / NCIMB 13988 / SH1), this protein is ATP synthase epsilon chain.